Here is a 31-residue protein sequence, read N- to C-terminus: Photosystem II reaction center protein T (31 aa).

A helical membrane pass occupies residues 3 to 23 (SFAYVLILTFAIATLFFAIAF).

The protein belongs to the PsbT family. In terms of assembly, PSII is composed of 1 copy each of membrane proteins PsbA, PsbB, PsbC, PsbD, PsbE, PsbF, PsbH, PsbI, PsbJ, PsbK, PsbL, PsbM, PsbT, PsbX, PsbY, PsbZ, Psb30/Ycf12, peripheral proteins PsbO, CyanoQ (PsbQ), PsbU, PsbV and a large number of cofactors. It forms dimeric complexes.

Its subcellular location is the cellular thylakoid membrane. Found at the monomer-monomer interface of the photosystem II (PS II) dimer, plays a role in assembly and dimerization of PSII. PSII is a light-driven water plastoquinone oxidoreductase, using light energy to abstract electrons from H(2)O, generating a proton gradient subsequently used for ATP formation. The polypeptide is Photosystem II reaction center protein T (Synechococcus sp. (strain CC9902)).